Reading from the N-terminus, the 200-residue chain is Dephospho-CoA kinase (200 aa).

The DPCK domain occupies V3–R200. ATP is bound at residue G11–T16.

Belongs to the CoaE family.

The protein resides in the cytoplasm. It catalyses the reaction 3'-dephospho-CoA + ATP = ADP + CoA + H(+). It functions in the pathway cofactor biosynthesis; coenzyme A biosynthesis; CoA from (R)-pantothenate: step 5/5. In terms of biological role, catalyzes the phosphorylation of the 3'-hydroxyl group of dephosphocoenzyme A to form coenzyme A. The polypeptide is Dephospho-CoA kinase (Brucella melitensis biotype 1 (strain ATCC 23456 / CCUG 17765 / NCTC 10094 / 16M)).